Here is a 137-residue protein sequence, read N- to C-terminus: Phosphoribosyl-AMP cyclohydrolase (137 aa).

D84 contributes to the Mg(2+) binding site. Residue C85 coordinates Zn(2+). Residues D86 and D88 each coordinate Mg(2+). Positions 101 and 108 each coordinate Zn(2+).

Belongs to the PRA-CH family. Homodimer. Mg(2+) serves as cofactor. Zn(2+) is required as a cofactor.

The protein resides in the cytoplasm. The enzyme catalyses 1-(5-phospho-beta-D-ribosyl)-5'-AMP + H2O = 1-(5-phospho-beta-D-ribosyl)-5-[(5-phospho-beta-D-ribosylamino)methylideneamino]imidazole-4-carboxamide. The protein operates within amino-acid biosynthesis; L-histidine biosynthesis; L-histidine from 5-phospho-alpha-D-ribose 1-diphosphate: step 3/9. Functionally, catalyzes the hydrolysis of the adenine ring of phosphoribosyl-AMP. This is Phosphoribosyl-AMP cyclohydrolase from Pelodictyon phaeoclathratiforme (strain DSM 5477 / BU-1).